The primary structure comprises 450 residues: Phosphoglucosamine mutase (450 aa).

The active-site Phosphoserine intermediate is Ser-104. The Mg(2+) site is built by Ser-104, Asp-241, Asp-243, and Asp-245. Phosphoserine is present on Ser-104.

Belongs to the phosphohexose mutase family. Mg(2+) serves as cofactor. Activated by phosphorylation.

It carries out the reaction alpha-D-glucosamine 1-phosphate = D-glucosamine 6-phosphate. In terms of biological role, catalyzes the conversion of glucosamine-6-phosphate to glucosamine-1-phosphate. The chain is Phosphoglucosamine mutase from Renibacterium salmoninarum (strain ATCC 33209 / DSM 20767 / JCM 11484 / NBRC 15589 / NCIMB 2235).